Consider the following 600-residue polypeptide: DNA ligase (600 aa).

Aspartate 258 provides a ligand contact to ATP. Lysine 260 acts as the N6-AMP-lysine intermediate in catalysis. ATP is bound by residues arginine 265, arginine 280, glutamate 310, phenylalanine 350, arginine 427, and lysine 433.

This sequence belongs to the ATP-dependent DNA ligase family. Mg(2+) is required as a cofactor.

The enzyme catalyses ATP + (deoxyribonucleotide)n-3'-hydroxyl + 5'-phospho-(deoxyribonucleotide)m = (deoxyribonucleotide)n+m + AMP + diphosphate.. With respect to regulation, inhibited by PCNA123 and PCNA323. Its function is as follows. DNA ligase that seals nicks in double-stranded DNA during DNA replication, DNA recombination and DNA repair. The sequence is that of DNA ligase from Sulfurisphaera tokodaii (strain DSM 16993 / JCM 10545 / NBRC 100140 / 7) (Sulfolobus tokodaii).